A 43-amino-acid chain; its full sequence is Photosystem II reaction center protein Psb30 (43 aa).

Residues 16–36 (IAQLTMLAMVLIAGPVVIVLL) traverse the membrane as a helical segment.

This sequence belongs to the Psb30/Ycf12 family. In terms of assembly, PSII is composed of 1 copy each of membrane proteins PsbA, PsbB, PsbC, PsbD, PsbE, PsbF, PsbH, PsbI, PsbJ, PsbK, PsbL, PsbM, PsbT, PsbX, PsbY, PsbZ, Psb30/Ycf12, peripheral proteins PsbO, CyanoQ (PsbQ), PsbU, PsbV and a large number of cofactors. It forms dimeric complexes.

It localises to the cellular thylakoid membrane. Its function is as follows. A core subunit of photosystem II (PSII), probably helps stabilize the reaction center. The chain is Photosystem II reaction center protein Psb30 from Trichodesmium erythraeum (strain IMS101).